The following is a 417-amino-acid chain: Gamma-glutamyl phosphate reductase (417 aa).

Belongs to the gamma-glutamyl phosphate reductase family.

The protein localises to the cytoplasm. It catalyses the reaction L-glutamate 5-semialdehyde + phosphate + NADP(+) = L-glutamyl 5-phosphate + NADPH + H(+). The protein operates within amino-acid biosynthesis; L-proline biosynthesis; L-glutamate 5-semialdehyde from L-glutamate: step 2/2. Its function is as follows. Catalyzes the NADPH-dependent reduction of L-glutamate 5-phosphate into L-glutamate 5-semialdehyde and phosphate. The product spontaneously undergoes cyclization to form 1-pyrroline-5-carboxylate. This is Gamma-glutamyl phosphate reductase from Sodalis glossinidius (strain morsitans).